A 185-amino-acid chain; its full sequence is Pycsar effector protein EcPycTM (185 aa).

3 helical membrane passes run 32–52 (ALLL…VGYF), 63–83 (MVIF…SVLL), and 141–161 (FILS…VSWI).

It localises to the cell inner membrane. Functionally, pycsar (pyrimidine cyclase system for antiphage resistance) provides immunity against bacteriophage. The pyrimidine cyclase (PycC) synthesizes cyclic nucleotides in response to infection; these serve as specific second messenger signals. The signals activate the adjacent effector, leading to bacterial cell death and abortive phage infection. A clade E Pycsar system. Its function is as follows. The effector component of a two-gene Pycsar system. Expression of this and adjacent cytidylate cyclase EcPycC (AC P0DV24) confers resistance to bacteriophage P1 and T5; this protein is required for resistance. When cells expressing the Pycsar system are infected by phage T5 at low multiplicity of infection (0.2 MOI) the culture survives, at 2.0 MOI bacteria enter growth arrest. The same cells enter growth arrest after exposure to 250 uM cCMP but not cUMP; this effector protein responds only to cCMP, usually produced by its cognate NTP cyclase. Some of the cells treated with cCMP have abnormal membrane protrusions, probably due to effects on membrane integrity. In Escherichia coli, this protein is Pycsar effector protein EcPycTM.